A 325-amino-acid polypeptide reads, in one-letter code: MRPILLQGHERSITQIKYNRDGDLLFTVAKDPVVNVWYSVNGERLGTYSGHTGAVWCVDVDWDTRHVLSGSADNSCRLWDCETGKQLALLETNSAVRTCGFDFGGNIIMFSTDKQMGYQCFVSFIDLRDPTQIEDNEPYMKIPCSESKITSAVWGPLGENIIAGHENGELNQYSAKSGEIVNSIKEHSKQINDIQTSRDMTMFVTASKDCTSKLFDSTSLEHQKTFRTERPVNSAAISPIYDHVVLGGGQEAMDVTTTSTRIGKFEARFFHVAFEEEFGRVKGHFGPINSLAFHPDGKSYSSGGEDGYVRIHYFDPQYFDFEFES.

WD repeat units lie at residues 8–47 (GHER…RLGT), 50–89 (GHTG…QLAL), 144–183 (CSES…IVNS), 186–225 (EHSK…HQKT), and 283–324 (GHFG…FEFE).

It belongs to the eIF-3 subunit I family. In terms of assembly, component of the eukaryotic translation initiation factor 3 (eIF-3) complex, which is composed of 13 subunits: eif3a, eif3b, eif3c, eif3d, eif3e, eif3f, eif3g, eif3h, eif3i, eif3j, eif3k, eif3l and eif3m.

It localises to the cytoplasm. In terms of biological role, component of the eukaryotic translation initiation factor 3 (eIF-3) complex, which is involved in protein synthesis of a specialized repertoire of mRNAs and, together with other initiation factors, stimulates binding of mRNA and methionyl-tRNAi to the 40S ribosome. The eIF-3 complex specifically targets and initiates translation of a subset of mRNAs involved in cell proliferation. This Xenopus tropicalis (Western clawed frog) protein is Eukaryotic translation initiation factor 3 subunit I (eif3i).